The following is a 369-amino-acid chain: 3-isopropylmalate dehydrogenase (369 aa).

Residues arginine 98, arginine 108, arginine 136, and aspartate 227 each contribute to the substrate site. Mg(2+)-binding residues include aspartate 227, aspartate 251, and aspartate 255. 290-302 provides a ligand contact to NAD(+); it reads GSAPDIAGKGIAN.

The protein belongs to the isocitrate and isopropylmalate dehydrogenases family. LeuB type 1 subfamily. Homodimer. Requires Mg(2+) as cofactor. It depends on Mn(2+) as a cofactor.

The protein resides in the cytoplasm. The enzyme catalyses (2R,3S)-3-isopropylmalate + NAD(+) = 4-methyl-2-oxopentanoate + CO2 + NADH. It functions in the pathway amino-acid biosynthesis; L-leucine biosynthesis; L-leucine from 3-methyl-2-oxobutanoate: step 3/4. In terms of biological role, catalyzes the oxidation of 3-carboxy-2-hydroxy-4-methylpentanoate (3-isopropylmalate) to 3-carboxy-4-methyl-2-oxopentanoate. The product decarboxylates to 4-methyl-2 oxopentanoate. This is 3-isopropylmalate dehydrogenase from Gluconobacter oxydans (strain 621H) (Gluconobacter suboxydans).